A 244-amino-acid polypeptide reads, in one-letter code: Large ribosomal subunit protein uL30w (244 aa).

Belongs to the universal ribosomal protein uL30 family.

The sequence is that of Large ribosomal subunit protein uL30w (RPL7D) from Arabidopsis thaliana (Mouse-ear cress).